A 446-amino-acid polypeptide reads, in one-letter code: MSRYFGTDGIRGRVGQGLISADFVLRLGNALGRVLAQGRDTRPMVLIGKDTRISGYMFESALEAGLVAAGADVQLIGPMPTPAIAFLTNTLRADAGVVISASHNPHDDNGIKFFSAMGEKLDDATEAAIEAAIEAPFLTVDSEYLGKVKRTRDAIGRYIEFSKASVSRGFTLRGLKLVLDCAHGATYHIAPMLFRELGAELVAIGVDPDGLNINAGVGSTHLETLAATVRESGADLGIAFDGDGDRVLMTDAQGRTVDGDDLLYVLARAWRASGRLKGTVVGTLMSNYGLEQALGTLGIPFIRAKVGDRYVHQALVESGGVLGGEASGHLLCLDRATTGDGIVSALQVLEVLRHEGLTLSQALLGLHKVPQKTVNVCWSGPARAAVEMPEVRQALVEAQAAVQGRGRVFLRPSGTEPVVRITVEADDVVLMQQTLDRLADVVRDAA.

The active-site Phosphoserine intermediate is serine 102. Residues serine 102, aspartate 241, aspartate 243, and aspartate 245 each contribute to the Mg(2+) site. Serine 102 is subject to Phosphoserine.

Belongs to the phosphohexose mutase family. Mg(2+) is required as a cofactor. In terms of processing, activated by phosphorylation.

The enzyme catalyses alpha-D-glucosamine 1-phosphate = D-glucosamine 6-phosphate. In terms of biological role, catalyzes the conversion of glucosamine-6-phosphate to glucosamine-1-phosphate. In Xylella fastidiosa (strain M12), this protein is Phosphoglucosamine mutase.